A 261-amino-acid chain; its full sequence is MTQPFIAVIPARLASTRLPNKPLADLGGKPMVVRVAERAREAGAQQVLVASDAQSVLDAARDHGFEAVLTRADHPSGTDRLAEVAATLGWSDDTVVVNVQGDEPLIDPVLVRDVASHLAAHPACAIATAAHPIHDAADVFNPNVVKVALDAQSVALYFSRAPIPWSRDAYQPHWPDVAAMPAPAFPVYRHIGLYAYRARFLRTYPTLAQAPIEQAEQLEQLRALWHGERIAVLITESAPEAGIDTPADLARVQALFQPSSK.

It belongs to the KdsB family.

The protein resides in the cytoplasm. It catalyses the reaction 3-deoxy-alpha-D-manno-oct-2-ulosonate + CTP = CMP-3-deoxy-beta-D-manno-octulosonate + diphosphate. It participates in nucleotide-sugar biosynthesis; CMP-3-deoxy-D-manno-octulosonate biosynthesis; CMP-3-deoxy-D-manno-octulosonate from 3-deoxy-D-manno-octulosonate and CTP: step 1/1. Its pathway is bacterial outer membrane biogenesis; lipopolysaccharide biosynthesis. Its function is as follows. Activates KDO (a required 8-carbon sugar) for incorporation into bacterial lipopolysaccharide in Gram-negative bacteria. The protein is 3-deoxy-manno-octulosonate cytidylyltransferase 1 of Burkholderia lata (strain ATCC 17760 / DSM 23089 / LMG 22485 / NCIMB 9086 / R18194 / 383).